The primary structure comprises 273 residues: Beta-lactamase OXA-23 (273 aa).

The first 17 residues, 1–17, serve as a signal peptide directing secretion; sequence MNKYFTCYVVASLFLSG. Ser-79 (acyl-ester intermediate) is an active-site residue. Positions 79, 82, 126, 217, 219, and 259 each coordinate a beta-lactam. An N6-carboxylysine modification is found at Lys-82.

This sequence belongs to the class-D beta-lactamase family. As to quaternary structure, monomer. Post-translationally, carboxylated on the epsilon-amino group of a lysine, with the resulting carbamate functional group serving as a general base. Probably N-carboxylated at Lys-82 at neutral pH in vivo and undergoes complete N-decarboxylation, at pH 4.1, in vitro.

The protein resides in the periplasm. It carries out the reaction a beta-lactam + H2O = a substituted beta-amino acid. Inhibited by the desmethyl carbapenem, MA-1-206, via a covalent binding to Ser-79. Functionally, class D beta-lactamase which confers resistance to the beta-lactam antibiotics, including ampicillin, and carbapenems such as imipenem and meropenem. Acts via hydrolysis of the beta-lactam ring. Has penicillin-, cephalosporin- and carbapenem-hydrolyzing activities, but lacks ceftazidime-hydrolyzing activity. The protein is Beta-lactamase OXA-23 of Acinetobacter baumannii.